Here is a 347-residue protein sequence, read N- to C-terminus: CDK2-associated and cullin domain-containing protein 1 (347 aa).

Positions 1-11 are enriched in acidic residues; it reads MEESMEEEEML. Disordered stretches follow at residues 1-63 and 320-347; these read MEES…LPGG and RGDQSRKRAGDELAYNSPSACASSRGYR. The segment covering 34–49 has biased composition (pro residues); sequence QPPPAPPLPPPPPPRP.

It belongs to the cullin family. Interacts with CDK2.

Cell cycle associated protein capable of promoting cell proliferation through the activation of CDK2 at the G1/S phase transition. The chain is CDK2-associated and cullin domain-containing protein 1 (Cacul1) from Rattus norvegicus (Rat).